Here is a 400-residue protein sequence, read N- to C-terminus: MLKKFFKEISYKKSYVLAFSGGLDSTVLLHMISLYIKKIKNNNNFFKKIFKFRAVYINHNICKESKYWSNHCHDQCLKYKVFFKSINIFISDFSEGIESSARRERYKALFSDLNPEEVLITAHHQDDQIETILLSLKRGSGPRGISGMQSIKKFDSHIIKRPLLHCKKEDIKLYAIKHNLNWIDDKSNLNIKFDRNFLRSEIIPLLKKRWPNIGNTISRSAKLCFDQEKLLNELLKDTLNSLVEKDKSLKFIELFKMSEIKRFAILRKWFCLNNFKMPSLSQLKHIWKNVIISKKDSKAEIKINNNIIKRFKKNLYFIPIYSKNHLKNIIFKTSLNHSKKIVLPYDLGTLITKPIMINENFIKKINFFYYNNKKKFIFLINLNYMKKMSFTVKLWILFIC.

20 to 25 (SGGLDS) provides a ligand contact to ATP.

Belongs to the tRNA(Ile)-lysidine synthase family.

It is found in the cytoplasm. It catalyses the reaction cytidine(34) in tRNA(Ile2) + L-lysine + ATP = lysidine(34) in tRNA(Ile2) + AMP + diphosphate + H(+). Its function is as follows. Ligates lysine onto the cytidine present at position 34 of the AUA codon-specific tRNA(Ile) that contains the anticodon CAU, in an ATP-dependent manner. Cytidine is converted to lysidine, thus changing the amino acid specificity of the tRNA from methionine to isoleucine. In Wigglesworthia glossinidia brevipalpis, this protein is tRNA(Ile)-lysidine synthase.